The sequence spans 365 residues: Carbamoyl phosphate synthase small chain (365 aa).

2 CPSase regions span residues Met1–Gly166 and Met1–His169. Residues Ser45, Gly218, and Gly220 each coordinate L-glutamine. In terms of domain architecture, Glutamine amidotransferase type-1 spans Arg170–Glu357. Cys245 (nucleophile) is an active-site residue. The L-glutamine site is built by Leu246, Gln249, Asn287, Gly289, and Tyr290. Residues His330 and Glu332 contribute to the active site.

It belongs to the CarA family. As to quaternary structure, composed of two chains; the small (or glutamine) chain promotes the hydrolysis of glutamine to ammonia, which is used by the large (or ammonia) chain to synthesize carbamoyl phosphate. Tetramer of heterodimers (alpha,beta)4.

The enzyme catalyses hydrogencarbonate + L-glutamine + 2 ATP + H2O = carbamoyl phosphate + L-glutamate + 2 ADP + phosphate + 2 H(+). It carries out the reaction L-glutamine + H2O = L-glutamate + NH4(+). The protein operates within amino-acid biosynthesis; L-arginine biosynthesis; carbamoyl phosphate from bicarbonate: step 1/1. It functions in the pathway pyrimidine metabolism; UMP biosynthesis via de novo pathway; (S)-dihydroorotate from bicarbonate: step 1/3. Functionally, small subunit of the glutamine-dependent carbamoyl phosphate synthetase (CPSase). CPSase catalyzes the formation of carbamoyl phosphate from the ammonia moiety of glutamine, carbonate, and phosphate donated by ATP, constituting the first step of 2 biosynthetic pathways, one leading to arginine and/or urea and the other to pyrimidine nucleotides. The small subunit (glutamine amidotransferase) binds and cleaves glutamine to supply the large subunit with the substrate ammonia. The chain is Carbamoyl phosphate synthase small chain from Bacillus cereus (strain ATCC 10987 / NRS 248).